A 109-amino-acid chain; its full sequence is MLLLPLLLLAGRFPGGDNEDALQGPTSYHVMQISSFTNSTWTENRGSGWLEDLQIHRWDSETGTAIFLKPWSKGNLSDEEITELVELFRVYFFGLVRELRDHVTEFQMK.

A signal peptide spans 1–18; the sequence is MLLLPLLLLAGRFPGGDN. N-linked (GlcNAc...) asparagine glycans are attached at residues Asn38 and Asn75.

In terms of assembly, heterodimer with B2M (beta-2-microglobulin). Interacts with saposin C. In terms of tissue distribution, expressed on cortical thymocytes, on certain T-cell leukemias, and in various other tissues.

The protein resides in the cell membrane. It localises to the endosome membrane. Its subcellular location is the lysosome membrane. Its function is as follows. Antigen-presenting protein that binds self and non-self lipid and glycolipid antigens and presents them to T-cell receptors on natural killer T-cells. The polypeptide is T-cell surface glycoprotein CD1b (CD1B) (Oryctolagus cuniculus (Rabbit)).